Consider the following 340-residue polypeptide: Methionine import ATP-binding protein MetN (340 aa).

One can recognise an ABC transporter domain in the interval 2–241 (IRIENLTKIY…PQSSVAKEFI (240 aa)). 38–45 (GLSGAGKS) contributes to the ATP binding site.

This sequence belongs to the ABC transporter superfamily. Methionine importer (TC 3.A.1.24) family. The complex is composed of two ATP-binding proteins (MetN), two transmembrane proteins (MetI) and a solute-binding protein (MetQ).

The protein localises to the cell membrane. It catalyses the reaction L-methionine(out) + ATP + H2O = L-methionine(in) + ADP + phosphate + H(+). It carries out the reaction D-methionine(out) + ATP + H2O = D-methionine(in) + ADP + phosphate + H(+). Part of the ABC transporter complex MetNIQ involved in methionine import. Responsible for energy coupling to the transport system. The polypeptide is Methionine import ATP-binding protein MetN (Desulfitobacterium hafniense (strain Y51)).